The chain runs to 348 residues: D-amino-acid oxidase (348 aa).

FAD is bound by residues A15, I18, K40, S52, G56, and N58. Positions 232 and 295 each coordinate (R)-lactate. Anthranilate-binding residues include Y232 and R295. FAD contacts are provided by R295, S323, G326, Y327, and Q328.

This sequence belongs to the DAMOX/DASOX family. FAD is required as a cofactor.

The protein localises to the peroxisome. It catalyses the reaction a D-alpha-amino acid + O2 + H2O = a 2-oxocarboxylate + H2O2 + NH4(+). The enzyme catalyses D-serine + O2 + H2O = 3-hydroxypyruvate + H2O2 + NH4(+). It carries out the reaction D-alanine + O2 + H2O = pyruvate + H2O2 + NH4(+). The catalysed reaction is D-arginine + O2 + H2O = 5-guanidino-2-oxopentanoate + H2O2 + NH4(+). Its function is as follows. Catalyzes the oxidative deamination of D-amino acids with broad substrate specificity. Enables the organism to utilize D-amino acids as a source of nutrients. The polypeptide is D-amino-acid oxidase (Schizosaccharomyces pombe (strain 972 / ATCC 24843) (Fission yeast)).